Consider the following 239-residue polypeptide: Glutathione S-transferase verG (239 aa).

A GST N-terminal domain is found at 18–101; it reads KPLIFVMEGR…YLSNKYDAKR (84 aa). A GST C-terminal domain is found at 107–237; sequence NAAENLEICN…ELDSRKEIAI (131 aa).

It belongs to the GST superfamily.

The enzyme catalyses RX + glutathione = an S-substituted glutathione + a halide anion + H(+). It functions in the pathway mycotoxin biosynthesis. Its function is as follows. Glutathione S-transferase; part of the gene cluster that mediates the biosynthesis of 11'-deoxyverticillin A, one of the dimeric epipolythiodioxopiperazines (ETPs) from the verticillin family that act as mycotoxins. 11'-deoxyverticillin A is required for normal conidiation. The nonribosomal peptide synthetase verP is speculated to be responsible for condensation of amino acids to form the carbon skeleton of verticillin, whereas the cluster-specific tailoring enzymes are involved in further modifications leading to the production of 11'-deoxyverticillin A. The chain is Glutathione S-transferase verG from Clonostachys rogersoniana.